Reading from the N-terminus, the 520-residue chain is Protein nucleotidyltransferase YdiU (520 aa).

Positions 108, 110, 111, 130, 142, 143, 193, and 200 each coordinate ATP. Catalysis depends on Asp-269, which acts as the Proton acceptor. Positions 270 and 279 each coordinate Mg(2+). Asp-279 serves as a coordination point for ATP.

The protein belongs to the SELO family. It depends on Mg(2+) as a cofactor. The cofactor is Mn(2+).

It carries out the reaction L-seryl-[protein] + ATP = 3-O-(5'-adenylyl)-L-seryl-[protein] + diphosphate. The catalysed reaction is L-threonyl-[protein] + ATP = 3-O-(5'-adenylyl)-L-threonyl-[protein] + diphosphate. It catalyses the reaction L-tyrosyl-[protein] + ATP = O-(5'-adenylyl)-L-tyrosyl-[protein] + diphosphate. The enzyme catalyses L-histidyl-[protein] + UTP = N(tele)-(5'-uridylyl)-L-histidyl-[protein] + diphosphate. It carries out the reaction L-seryl-[protein] + UTP = O-(5'-uridylyl)-L-seryl-[protein] + diphosphate. The catalysed reaction is L-tyrosyl-[protein] + UTP = O-(5'-uridylyl)-L-tyrosyl-[protein] + diphosphate. Its function is as follows. Nucleotidyltransferase involved in the post-translational modification of proteins. It can catalyze the addition of adenosine monophosphate (AMP) or uridine monophosphate (UMP) to a protein, resulting in modifications known as AMPylation and UMPylation. The sequence is that of Protein nucleotidyltransferase YdiU from Cupriavidus pinatubonensis (strain JMP 134 / LMG 1197) (Cupriavidus necator (strain JMP 134)).